The following is a 271-amino-acid chain: Phosphatidylglycerol--prolipoprotein diacylglyceryl transferase (271 aa).

7 helical membrane passes run 21-41 (LAVR…MWLA), 60-80 (LLFA…VIFY), 95-115 (VWTG…AMFW), 124-144 (FFGV…MGRI), 177-197 (QLYE…WFIG), 203-223 (GSVS…VEYV), and 236-256 (FISM…LMMV). Arg-143 contributes to the a 1,2-diacyl-sn-glycero-3-phospho-(1'-sn-glycerol) binding site.

This sequence belongs to the Lgt family.

The protein localises to the cell inner membrane. The catalysed reaction is L-cysteinyl-[prolipoprotein] + a 1,2-diacyl-sn-glycero-3-phospho-(1'-sn-glycerol) = an S-1,2-diacyl-sn-glyceryl-L-cysteinyl-[prolipoprotein] + sn-glycerol 1-phosphate + H(+). The protein operates within protein modification; lipoprotein biosynthesis (diacylglyceryl transfer). In terms of biological role, catalyzes the transfer of the diacylglyceryl group from phosphatidylglycerol to the sulfhydryl group of the N-terminal cysteine of a prolipoprotein, the first step in the formation of mature lipoproteins. This is Phosphatidylglycerol--prolipoprotein diacylglyceryl transferase from Vibrio cholerae serotype O1 (strain ATCC 39541 / Classical Ogawa 395 / O395).